Consider the following 404-residue polypeptide: MQIGQRLGTPLSPSATRVMLLGAGELGKEVIIALQRLGVEVIAVDRYPDAPGHQVAHRAHVIDMTDAAALRALVEAERPHLIVPEIEAIATDALAAIEAAGLAEVIPTARATQLTMNREGIRRLAAEELGLATSPYAFADSFDAFSAAVAKIGMPCVVKPVMSSSGKGQSVVRSEADVKAAWDYAMAGGRVNHGRVIVEGFIDFDYEITQLTVRAIDPATLATRTYFCEPVGHVQVAGDYVESWQPQPMSAAALQKSRDIAHKVTEALGGRGLFGVELFVRGDDVWFSEVSPRPHDTGLVTLASQRQSEFELHARAILGLPVDPTLGSPAASAVIYGGLDERGIAFEGVRDALAVPGADLRLFGKPESFVKRRMGVALATGANVDEARERAKRAAAAVRPVSSR.

Residues 25–26 and Glu-85 contribute to the N(1)-(5-phospho-beta-D-ribosyl)glycinamide site; that span reads EL. Residues Arg-118, Lys-159, 164–169, 199–202, and Glu-207 each bind ATP; these read SSGKGQ and EGFI. One can recognise an ATP-grasp domain in the interval 123–318; sequence RLAAEELGLA…EFELHARAIL (196 aa). Mg(2+) contacts are provided by Glu-277 and Glu-289. Residues Asp-296, Lys-365, and 372–373 each bind N(1)-(5-phospho-beta-D-ribosyl)glycinamide; that span reads RR.

The protein belongs to the PurK/PurT family. Homodimer.

The catalysed reaction is N(1)-(5-phospho-beta-D-ribosyl)glycinamide + formate + ATP = N(2)-formyl-N(1)-(5-phospho-beta-D-ribosyl)glycinamide + ADP + phosphate + H(+). Its pathway is purine metabolism; IMP biosynthesis via de novo pathway; N(2)-formyl-N(1)-(5-phospho-D-ribosyl)glycinamide from N(1)-(5-phospho-D-ribosyl)glycinamide (formate route): step 1/1. Involved in the de novo purine biosynthesis. Catalyzes the transfer of formate to 5-phospho-ribosyl-glycinamide (GAR), producing 5-phospho-ribosyl-N-formylglycinamide (FGAR). Formate is provided by PurU via hydrolysis of 10-formyl-tetrahydrofolate. The sequence is that of Formate-dependent phosphoribosylglycinamide formyltransferase from Burkholderia vietnamiensis (strain G4 / LMG 22486) (Burkholderia cepacia (strain R1808)).